Consider the following 95-residue polypeptide: ESAT-6-like protein EsxC (95 aa).

Belongs to the WXG100 family. ESAT-6 subfamily.

It localises to the secreted. The polypeptide is ESAT-6-like protein EsxC (Mycolicibacterium paratuberculosis (strain ATCC BAA-968 / K-10) (Mycobacterium paratuberculosis)).